The chain runs to 625 residues: MATKPGVLTDWPWTPLGSFKYIVIAPWAVHSTYRFVTDDPEKRDLGYFLVFPFLLFRILHNQVWISLSRYYTSSGKRRIVDKGIDFNQVDRETNWDDQILFNGVLFYIGINLLPEAKQLPWWRTDGVLMAALIHTGPVEFLYYWLHKALHHHFLYSRYHSHHHSSIVTEPITSVIHPFAEHIAYFILFAIPLLTTLLTKTASIISFAGYIIYIDFMNNMGHCNFELIPKRLFHLFPPLKFLCYTPSYHSLHHTQFRTNYSLFMPLYDYIYGTMDESTDTLYEKTLERGDDIVDVVHLTHLTTPESIYHLRIGLASFASYPFAYRWFMRLLWPFTSLSMIFTLFYARLFVAERNSFNKLNLQSWVIPRYNLQYLLKWRKEAINNMIEKAILEADKKGVKVLSLGLMNQGEELNRNGEVYIHNHPDMKVRLVDGSRLAAAVVINSVPKATTSVVMTGNLTKVAYTIASALCQRGVQVSTLRLDEYEKIRSCVPQECRDHLVYLTSEALSSNKVWLVGEGTTREEQEKATKGTLFIPFSQFPLKQLRRDCIYHTTPALIVPKSLVNVHSCENWLPRKAMSATRVAGILHALEGWEMHECGTSLLLSDLDQVWEACLSHGFQPLLLPHH.

5 helical membrane passes run 45-65 (LGYFLVFPFLLFRILHNQVWI), 126-146 (GVLMAALIHTGPVEFLYYWLH), 177-197 (PFAEHIAYFILFAIPLLTTLL), 200-220 (TASIISFAGYIIYIDFMNNMG), and 329-349 (LLWPFTSLSMIFTLFYARLFV). In terms of domain architecture, Fatty acid hydroxylase spans 138 to 272 (VEFLYYWLHK…MPLYDYIYGT (135 aa)).

Belongs to the sterol desaturase family. In terms of assembly, homodimer. Interacts with CER3, CYTB5-B, CYTB5-C, CYTB5-D and CYTB5-E. Expressed in seedlings, stems, leaves, flowers, fruits and siliques. Not detected in roots, pollen and seeds. Expressed in trichomes, cotyledons, shoot apical meristem and leaf primordia. Preferentially associated with young leaves rather than mature leaves. Expressed in the epidermis of the stem and caulines leaves, in the carpels and the sepals.

The protein resides in the endoplasmic reticulum membrane. The catalysed reaction is a long-chain fatty aldehyde + 2 NADPH + O2 + H(+) = a long-chain alkane + formate + 2 NADP(+) + H2O. Its function is as follows. Aldehyde decarbonylase involved in the conversion of aldehydes to alkanes. Core component of a very-long-chain alkane synthesis complex. Involved in epicuticular wax biosynthesis and pollen fertility. In Arabidopsis thaliana (Mouse-ear cress), this protein is Very-long-chain aldehyde decarbonylase CER1 (CER1).